A 206-amino-acid polypeptide reads, in one-letter code: Thymidylate kinase (206 aa).

Residue 11-18 (GIDGAGKT) coordinates ATP.

The protein belongs to the thymidylate kinase family.

The enzyme catalyses dTMP + ATP = dTDP + ADP. Functionally, phosphorylation of dTMP to form dTDP in both de novo and salvage pathways of dTTP synthesis. The sequence is that of Thymidylate kinase from Burkholderia cenocepacia (strain HI2424).